We begin with the raw amino-acid sequence, 386 residues long: Chorismate synthase (386 aa).

Positions 32–60 (LPLSEDDVQRELDRRRPGQSGVSTPRSER) are disordered. A compositionally biased stretch (basic and acidic residues) spans 38 to 47 (DVQRELDRRR). Position 46 (Arg46) interacts with NADP(+). FMN contacts are provided by residues 123-125 (RAS), Gly290, 305-309 (KPTPS), and Arg332.

It belongs to the chorismate synthase family. FMNH2 is required as a cofactor.

The catalysed reaction is 5-O-(1-carboxyvinyl)-3-phosphoshikimate = chorismate + phosphate. Its pathway is metabolic intermediate biosynthesis; chorismate biosynthesis; chorismate from D-erythrose 4-phosphate and phosphoenolpyruvate: step 7/7. Its function is as follows. Catalyzes the anti-1,4-elimination of the C-3 phosphate and the C-6 proR hydrogen from 5-enolpyruvylshikimate-3-phosphate (EPSP) to yield chorismate, which is the branch point compound that serves as the starting substrate for the three terminal pathways of aromatic amino acid biosynthesis. This reaction introduces a second double bond into the aromatic ring system. This is Chorismate synthase from Methanopyrus kandleri (strain AV19 / DSM 6324 / JCM 9639 / NBRC 100938).